Consider the following 219-residue polypeptide: Redox-sensing transcriptional repressor Rex (219 aa).

Residues 17–56 (VYLRVLDNLVKRDIEVVSSKSLSKETGFTAEQIRKDLAFF) constitute a DNA-binding region (H-T-H motif). 91 to 96 (GAGHLG) is an NAD(+) binding site.

The protein belongs to the transcriptional regulatory Rex family. As to quaternary structure, homodimer.

It is found in the cytoplasm. Its function is as follows. Modulates transcription in response to changes in cellular NADH/NAD(+) redox state. In Natranaerobius thermophilus (strain ATCC BAA-1301 / DSM 18059 / JW/NM-WN-LF), this protein is Redox-sensing transcriptional repressor Rex.